The following is a 250-amino-acid chain: Ribonuclease PH (250 aa).

Phosphate contacts are provided by residues arginine 86 and glycine 124–arginine 126.

This sequence belongs to the RNase PH family. As to quaternary structure, homohexameric ring arranged as a trimer of dimers.

The catalysed reaction is tRNA(n+1) + phosphate = tRNA(n) + a ribonucleoside 5'-diphosphate. Functionally, phosphorolytic 3'-5' exoribonuclease that plays an important role in tRNA 3'-end maturation. Removes nucleotide residues following the 3'-CCA terminus of tRNAs; can also add nucleotides to the ends of RNA molecules by using nucleoside diphosphates as substrates, but this may not be physiologically important. Probably plays a role in initiation of 16S rRNA degradation (leading to ribosome degradation) during starvation. In Exiguobacterium sibiricum (strain DSM 17290 / CCUG 55495 / CIP 109462 / JCM 13490 / 255-15), this protein is Ribonuclease PH.